The following is a 426-amino-acid chain: MRFKFPLMAIGLEVVMIVLFALFVQYETSVNTSRNPNETESAAMDVEKTMESYPFFQDVHIMVFAGFGFLMTFLWKYGFSGVGINLLIAALGLQWGTIIQGIFRSHGQKFLIEMKNMIHADFSTVTVLISFGAVLGKTSPVQMLIMTILEITVYAANEYLVFKILWASDTGESMTIHAFGAYFGLAVAGILYRSGLKEKHSNEESVYHSDLFAMIGSLFLWIFWPSFNSATADEAKKQYRAIVNTYFSLAASVVTAYACSSLLESRGKLNMVHIQNATLAGGVAVGTCADMEIPPYYAMIIGSIAGAVSVFGFKFLTPLFTTKLRIHDTCGVHNLHGLPGVIGGLAGIITVALEESDSTKTVSQAAALGSSIATALVGGLITGAILKIPFWAQPPDEDCYDDSVYWEVPERKEYDNHFHELLSTLH.

Residues 1 to 4 lie on the Cytoplasmic side of the membrane; it reads MRFK. Residues 5 to 25 traverse the membrane as a helical segment; that stretch reads FPLMAIGLEVVMIVLFALFVQ. At 26 to 54 the chain is on the extracellular side; that stretch reads YETSVNTSRNPNETESAAMDVEKTMESYP. N31 and N37 each carry an N-linked (GlcNAc...) asparagine glycan. A helical membrane pass occupies residues 55–75; that stretch reads FFQDVHIMVFAGFGFLMTFLW. Residues 76–78 lie on the Cytoplasmic side of the membrane; the sequence is KYG. A helical transmembrane segment spans residues 79–99; the sequence is FSGVGINLLIAALGLQWGTII. Over 100–124 the chain is Extracellular; the sequence is QGIFRSHGQKFLIEMKNMIHADFST. Transmembrane regions (helical) follow at residues 125–145 and 146–166; these read VTVL…QMLI and MTIL…KILW. Over 167 to 170 the chain is Extracellular; the sequence is ASDT. A helical transmembrane segment spans residues 171-191; sequence GESMTIHAFGAYFGLAVAGIL. The Cytoplasmic segment spans residues 192 to 210; that stretch reads YRSGLKEKHSNEESVYHSD. A helical membrane pass occupies residues 211-231; the sequence is LFAMIGSLFLWIFWPSFNSAT. Topologically, residues 232 to 241 are extracellular; the sequence is ADEAKKQYRA. A helical membrane pass occupies residues 242-262; it reads IVNTYFSLAASVVTAYACSSL. Topologically, residues 263 to 270 are cytoplasmic; it reads LESRGKLN. A helical transmembrane segment spans residues 271–288; it reads MVHIQNATLAGGVAVGTC. The Extracellular segment spans residues 289-292; that stretch reads ADME. A helical membrane pass occupies residues 293–313; sequence IPPYYAMIIGSIAGAVSVFGF. The Cytoplasmic portion of the chain corresponds to 314 to 331; it reads KFLTPLFTTKLRIHDTCG. Residues 332 to 352 form a helical membrane-spanning segment; that stretch reads VHNLHGLPGVIGGLAGIITVA. Residues 353–371 lie on the Extracellular side of the membrane; sequence LEESDSTKTVSQAAALGSS. The chain crosses the membrane as a helical span at residues 372–392; that stretch reads IATALVGGLITGAILKIPFWA. Over 393–426 the chain is Cytoplasmic; that stretch reads QPPDEDCYDDSVYWEVPERKEYDNHFHELLSTLH.

This sequence belongs to the ammonium transporter (TC 2.A.49) family. Rh subfamily. Homodimer. Heterotrimer; a RHCE monomer interacts with a RHAG homodimer. Component of the ankyrin-1 complex in the erythrocyte, composed of ANK1, RHCE, RHAG, SLC4A1, EPB42, GYPA, GYPB and AQP1. Interacts with GYPB (via the N-terminal); this interaction bridges the (RHAG)2(RHCE) heterotrimer with the SLC4A1 Band 3 I dimer complexed with GYPA. Glycosylated.

It is found in the membrane. It catalyses the reaction methylamine(out) = methylamine(in). The catalysed reaction is NH4(+)(in) = NH4(+)(out). The enzyme catalyses CO2(out) = CO2(in). Functionally, component of the ankyrin-1 complex, a multiprotein complex involved in the stability and shape of the erythrocyte membrane. Heterotrimer with RHCE (RHAG)2(RHCE), that transports ammonium and its related derivative methylammonium, in both neutral and ionic forms, across the erythrocyte membrane. The transport of NH4(+) is electrogenic and masks the NH3 transport. Also, may act as a CO2 channel. Moreover in erythrocyte, regulates RHD membrane expression and is associated with rhesus blood group antigen expression. The protein is Ammonium transporter Rh type A of Bos taurus (Bovine).